The primary structure comprises 504 residues: Protein anon-37Cs (504 aa).

In terms of tissue distribution, low levels seen in adult heads, thorax, abdomen and ovaries, high levels in testes.

It is found in the cytoplasm. Has a non-vital function. The chain is Protein anon-37Cs (anon-37Cs) from Drosophila melanogaster (Fruit fly).